The following is a 289-amino-acid chain: Probable WRKY transcription factor 38 (289 aa).

Residues 62-103 (PETEDDQFSDLSSRDSSPPPQGSPSKKRKIDSTNSSENWRDD) form a disordered region. Positions 104 to 172 (SPDPIYYDGY…YFGHHTCKTE (69 aa)) form a DNA-binding region, WRKY. The span at 249–266 (LSSPSGSYPPSSSSGSES) shows a compositional bias: low complexity. Positions 249–278 (LSSPSGSYPPSSSSGSESADFNSDLLFDNP) are disordered.

This sequence belongs to the WRKY group III family.

The protein resides in the nucleus. In terms of biological role, transcription factor. Interacts specifically with the W box (5'-(T)TGAC[CT]-3'), a frequently occurring elicitor-responsive cis-acting element. This is Probable WRKY transcription factor 38 (WRKY38) from Arabidopsis thaliana (Mouse-ear cress).